An 899-amino-acid polypeptide reads, in one-letter code: Alanine--tRNA ligase, chloroplastic/mitochondrial (899 aa).

Zn(2+) contacts are provided by H581, H585, C683, and H687.

It belongs to the class-II aminoacyl-tRNA synthetase family. As to quaternary structure, monomer. The cofactor is Zn(2+).

It localises to the plastid. The protein resides in the chloroplast. It is found in the mitochondrion. The catalysed reaction is tRNA(Ala) + L-alanine + ATP = L-alanyl-tRNA(Ala) + AMP + diphosphate. Catalyzes the attachment of alanine to tRNA(Ala) in a two-step reaction: alanine is first activated by ATP to form Ala-AMP and then transferred to the acceptor end of tRNA(Ala). Also edits incorrectly charged tRNA(Ala) via its editing domain. The sequence is that of Alanine--tRNA ligase, chloroplastic/mitochondrial from Micromonas pusilla (strain CCMP1545) (Picoplanktonic green alga).